The primary structure comprises 191 residues: Probable GTP-binding protein EngB (191 aa).

In terms of domain architecture, EngB-type G spans Asp22–Glu191. GTP is bound by residues Gly30–Ser37, Gly57–Thr61, Asp75–Gly78, Thr142–Asp145, and Thr172–Ser174. Mg(2+)-binding residues include Ser37 and Thr59.

It belongs to the TRAFAC class TrmE-Era-EngA-EngB-Septin-like GTPase superfamily. EngB GTPase family. Mg(2+) is required as a cofactor.

In terms of biological role, necessary for normal cell division and for the maintenance of normal septation. The polypeptide is Probable GTP-binding protein EngB (Acholeplasma laidlawii (strain PG-8A)).